The following is a 179-amino-acid chain: Large ribosomal subunit protein bL19 (179 aa).

Belongs to the bacterial ribosomal protein bL19 family.

Functionally, this protein is located at the 30S-50S ribosomal subunit interface and may play a role in the structure and function of the aminoacyl-tRNA binding site. The polypeptide is Large ribosomal subunit protein bL19 (Rhizobium johnstonii (strain DSM 114642 / LMG 32736 / 3841) (Rhizobium leguminosarum bv. viciae)).